Consider the following 153-residue polypeptide: Endoribonuclease YbeY (153 aa).

Zn(2+) is bound by residues His116, His120, and His126.

It belongs to the endoribonuclease YbeY family. The cofactor is Zn(2+).

Its subcellular location is the cytoplasm. In terms of biological role, single strand-specific metallo-endoribonuclease involved in late-stage 70S ribosome quality control and in maturation of the 3' terminus of the 16S rRNA. The sequence is that of Endoribonuclease YbeY from Paraburkholderia phytofirmans (strain DSM 17436 / LMG 22146 / PsJN) (Burkholderia phytofirmans).